We begin with the raw amino-acid sequence, 224 residues long: Viral late gene transcription factor 3 (224 aa).

The protein belongs to the orthopoxvirus VLTF-3/OPG127 family. Interacts with the late transcription elongation factor VLTF-4/OPG110. Interacts with the late transcription factors VLTF-1/OPG093.

Acts with RNA polymerase to initiate transcription from late gene promoters. The polypeptide is Viral late gene transcription factor 3 (OPG127) (Monkeypox virus).